We begin with the raw amino-acid sequence, 570 residues long: MAPLFILTETAAGLVLFKADKKLLKKDDVASEIETAEGINGLLKLKQFQKFDSAATALEEVASLVEGKVSPMLAKLLDTLKDEKKASLAVADPKLGQAINKLPGLTLTPISDSKTNDIFRGIRDHLPSLIPGLLPEHISTMSLGLSHSLSRHKLKFSPDKVDTMIVQAISLLDDLDKELNTYAMRVKEWYGWHFPEMGKIVNDNLAYARVILKVGMRVNTSSTDLADILPEEIEAAIKAAAEVSMGTEITEEDLDNIKLLAEQVVGFTEYRQQLSSYLSARMQAIAPNLTELVGELVGARLIAHAGSLMNLAKSPASTIQILGAEKALFRALKTKHDTPKYGLIYHASLVGQATGKNKGKIARMLAAKAAIGLRVDALSDWSAQGEGKGDDVDDEERSALGVTSRAKIERHLRGIEGKPLLPRGVAVGPNGKTTSAPGKWEVKEARKYNADADGLAGDEPAAAIPVREKKNKKLIEEVAEKSDSDSSDESDASEKKSKKGDKEAKKAEKAAKKAEKAAKKAAKAAKKAVKEAKEVKKSAVNDTPEVNGKKRKSEDDGEKSEKKKKKKNKD.

In terms of domain architecture, Nop spans 285–417 (IAPNLTELVG…IERHLRGIEG (133 aa)). Disordered stretches follow at residues 451–470 (DADG…REKK) and 475–570 (IEEV…KNKD). Composition is skewed to basic and acidic residues over residues 475-484 (IEEVAEKSDS), 492-518 (ASEK…EKAA), and 528-539 (AVKEAKEVKKSA).

The protein belongs to the NOP5/NOP56 family.

It localises to the nucleus. Its subcellular location is the nucleolus. Its function is as follows. Required for pre-18S rRNA processing. May bind microtubules. This is Nucleolar protein 58 (NOP58) from Sclerotinia sclerotiorum (strain ATCC 18683 / 1980 / Ss-1) (White mold).